The primary structure comprises 972 residues: Glycine dehydrogenase (decarboxylating) (972 aa).

K713 is subject to N6-(pyridoxal phosphate)lysine.

The protein belongs to the GcvP family. In terms of assembly, the glycine cleavage system is composed of four proteins: P, T, L and H. It depends on pyridoxal 5'-phosphate as a cofactor.

The catalysed reaction is N(6)-[(R)-lipoyl]-L-lysyl-[glycine-cleavage complex H protein] + glycine + H(+) = N(6)-[(R)-S(8)-aminomethyldihydrolipoyl]-L-lysyl-[glycine-cleavage complex H protein] + CO2. In terms of biological role, the glycine cleavage system catalyzes the degradation of glycine. The P protein binds the alpha-amino group of glycine through its pyridoxal phosphate cofactor; CO(2) is released and the remaining methylamine moiety is then transferred to the lipoamide cofactor of the H protein. This Aromatoleum aromaticum (strain DSM 19018 / LMG 30748 / EbN1) (Azoarcus sp. (strain EbN1)) protein is Glycine dehydrogenase (decarboxylating).